Consider the following 907-residue polypeptide: Protein translocase subunit SecA (907 aa).

ATP-binding positions include glutamine 87, 105–109, and aspartate 511; that span reads GEGKT. Zn(2+) is bound by residues cysteine 891, cysteine 893, cysteine 902, and histidine 903.

Belongs to the SecA family. As to quaternary structure, monomer and homodimer. Part of the essential Sec protein translocation apparatus which comprises SecA, SecYEG and auxiliary proteins SecDF-YajC and YidC. It depends on Zn(2+) as a cofactor.

Its subcellular location is the cell inner membrane. The protein localises to the cytoplasm. The enzyme catalyses ATP + H2O + cellular proteinSide 1 = ADP + phosphate + cellular proteinSide 2.. In terms of biological role, part of the Sec protein translocase complex. Interacts with the SecYEG preprotein conducting channel. Has a central role in coupling the hydrolysis of ATP to the transfer of proteins into and across the cell membrane, serving both as a receptor for the preprotein-SecB complex and as an ATP-driven molecular motor driving the stepwise translocation of polypeptide chains across the membrane. This is Protein translocase subunit SecA from Aromatoleum aromaticum (strain DSM 19018 / LMG 30748 / EbN1) (Azoarcus sp. (strain EbN1)).